Consider the following 290-residue polypeptide: Putative speedy protein-like protein 3 (290 aa).

The segment at 16 to 50 is disordered; it reads GVDPSPPCRSLGWKRKKEWSDESEEEPEKELAPEP. The segment covering 36–50 has biased composition (acidic residues); it reads DESEEEPEKELAPEP.

Belongs to the Speedy/Ringo family.

The sequence is that of Putative speedy protein-like protein 3 from Homo sapiens (Human).